Here is a 194-residue protein sequence, read N- to C-terminus: Lytic chitin monooxygenase (194 aa).

Residues methionine 1–alanine 28 form the signal peptide. 2 residues coordinate Cu cation: histidine 29 and histidine 114. The 163-residue stretch at histidine 29 to valine 191 folds into the Chitin-binding type-4 domain.

It depends on Cu(2+) as a cofactor.

It localises to the secreted. It catalyses the reaction [(1-&gt;4)-N-acetyl-beta-D-glucosaminyl]n+m + reduced acceptor + O2 = [(1-&gt;4)-N-acetyl-beta-D-glucosaminyl]m-1-(1-&gt;4)-2-(acetylamino)-2-deoxy-D-glucono-1,5-lactone + [(1-&gt;4)-N-acetyl-beta-D-glucosaminyl]n + acceptor + H2O.. The protein operates within glycan degradation; chitin degradation. Its function is as follows. Involved in chitin degradation. Catalyzes the oxidative cleavage of glycosidic bonds in both alpha- and beta-chitin via a copper-dependent mechanism, leading to oxidized chitooligosaccharides with a dominance of even-numbered products. Acts synergistically with the chitinase EfChi18A, and combining the two enzymes leads to rapid and complete depolymerization of crystalline chitin, especially with beta-chitin as a substrate. Is likely involved in a chitin degradation pathway that allows E.faecalis V583 to grow on chitin as a carbon source. The protein is Lytic chitin monooxygenase of Enterococcus faecalis (strain ATCC 700802 / V583).